Consider the following 303-residue polypeptide: Zinc transporter ZIP9 (303 aa).

Residues 7–27 (ISLLSLAMLVGCYVSGIIPLA) form a helical membrane-spanning segment. N29 is a glycosylation site (N-linked (GlcNAc...) asparagine). Transmembrane regions (helical) follow at residues 35–55 (LKLV…AVIV), 102–122 (AYIG…DQIG), 142–162 (ITTT…LGAA), 172–192 (LIVF…LVSF), and 206–226 (HLLV…LGLS). Residue N237 is glycosylated (N-linked (GlcNAc...) asparagine). Transmembrane regions (helical) follow at residues 240–260 (GVAM…HVLP) and 282–302 (LEVC…IGHQ).

It belongs to the ZIP transporter (TC 2.A.5) family.

The protein localises to the golgi apparatus. It is found in the trans-Golgi network membrane. Its subcellular location is the cell membrane. It localises to the cytoplasm. The protein resides in the perinuclear region. The protein localises to the mitochondrion. It is found in the nucleus. It catalyses the reaction Zn(2+)(in) = Zn(2+)(out). Its function is as follows. Transports zinc ions across cell and organelle membranes into the cytoplasm and regulates intracellular zinc homeostasis. Participates in the zinc ions efflux out of the secretory compartments. Also functions as a membrane androgen receptor that mediates, through a G protein, the non-classical androgen signaling pathway, characterized by the activation of MAPK3/MAPK1 (Erk1/2) and transcription factors CREB1 or ATF1. Moreover, has dual functions as a membrane-bound androgen receptor and as an androgen-dependent zinc transporter both of which are mediated through an inhibitory G protein (Gi) that mediates both MAP kinase and zinc signaling leading to the androgen-dependent apoptotic process. This is Zinc transporter ZIP9 from Xenopus tropicalis (Western clawed frog).